We begin with the raw amino-acid sequence, 923 residues long: Serine/threonine-protein phosphatase 6 regulatory subunit 2 (923 aa).

Ser289 is modified (phosphoserine). Disordered regions lie at residues 409–441, 662–685, and 743–766; these read EASG…SPPE, VPGL…DSAG, and RCSS…PEKT. Residues 430 to 441 show a composition bias toward polar residues; that stretch reads LETTPSITSPPE. Phosphoserine is present on residues Ser746 and Ser796.

It belongs to the SAPS family. In terms of assembly, protein phosphatase 6 (PP6) holoenzyme is proposed to be a heterotrimeric complex formed by the catalytic subunit, a SAPS domain-containing subunit (PP6R) and an ankyrin repeat-domain containing regulatory subunit (ARS). Interacts with PPP6C and NFKBIE. Interacts with ANKRD28. As to expression, strongest expression in bladder and lower levels found in heart and pancreas. Very weak expression observed in all other tissues tested.

Its subcellular location is the cytoplasm. In terms of biological role, regulatory subunit of protein phosphatase 6 (PP6). May function as a scaffolding PP6 subunit. Involved in the PP6-mediated dephosphorylation of NFKBIE opposing its degradation in response to TNF-alpha. The chain is Serine/threonine-protein phosphatase 6 regulatory subunit 2 (Ppp6r2) from Mus musculus (Mouse).